The chain runs to 227 residues: tRNA (guanine-N(1)-)-methyltransferase (227 aa).

Residues Gly107 and 127–132 (LGDFIL) each bind S-adenosyl-L-methionine.

Belongs to the RNA methyltransferase TrmD family. Homodimer.

Its subcellular location is the cytoplasm. It carries out the reaction guanosine(37) in tRNA + S-adenosyl-L-methionine = N(1)-methylguanosine(37) in tRNA + S-adenosyl-L-homocysteine + H(+). In terms of biological role, specifically methylates guanosine-37 in various tRNAs. The protein is tRNA (guanine-N(1)-)-methyltransferase of Mesomycoplasma hyopneumoniae (strain 232) (Mycoplasma hyopneumoniae).